Here is a 526-residue protein sequence, read N- to C-terminus: ATP synthase subunit alpha (526 aa).

171–178 (GDRQTGKT) contributes to the ATP binding site.

This sequence belongs to the ATPase alpha/beta chains family. As to quaternary structure, F-type ATPases have 2 components, CF(1) - the catalytic core - and CF(0) - the membrane proton channel. CF(1) has five subunits: alpha(3), beta(3), gamma(1), delta(1), epsilon(1). CF(0) has four main subunits: a(1), b(1), b'(1) and c(9-12).

It is found in the cell inner membrane. It carries out the reaction ATP + H2O + 4 H(+)(in) = ADP + phosphate + 5 H(+)(out). Functionally, produces ATP from ADP in the presence of a proton gradient across the membrane. The alpha chain is a regulatory subunit. The sequence is that of ATP synthase subunit alpha from Chlorobium phaeovibrioides (strain DSM 265 / 1930) (Prosthecochloris vibrioformis (strain DSM 265)).